The sequence spans 275 residues: Diaminopimelate epimerase (275 aa).

Substrate contacts are provided by Asn-13, Gln-46, and Asn-65. Cys-74 acts as the Proton donor in catalysis. Residues 75–76 (GN), Asn-158, Asn-191, and 209–210 (ER) contribute to the substrate site. Cys-218 serves as the catalytic Proton acceptor. 219 to 220 (GT) is a binding site for substrate.

Belongs to the diaminopimelate epimerase family. As to quaternary structure, homodimer.

The protein resides in the cytoplasm. The enzyme catalyses (2S,6S)-2,6-diaminopimelate = meso-2,6-diaminopimelate. It functions in the pathway amino-acid biosynthesis; L-lysine biosynthesis via DAP pathway; DL-2,6-diaminopimelate from LL-2,6-diaminopimelate: step 1/1. Its function is as follows. Catalyzes the stereoinversion of LL-2,6-diaminopimelate (L,L-DAP) to meso-diaminopimelate (meso-DAP), a precursor of L-lysine and an essential component of the bacterial peptidoglycan. This chain is Diaminopimelate epimerase, found in Nitrosomonas europaea (strain ATCC 19718 / CIP 103999 / KCTC 2705 / NBRC 14298).